Here is a 206-residue protein sequence, read N- to C-terminus: Small ribosomal subunit protein uS4 (206 aa).

The 61-residue stretch at 96–156 (GRLDNVVYRM…EKAKKQSRVK (61 aa)) folds into the S4 RNA-binding domain.

The protein belongs to the universal ribosomal protein uS4 family. Part of the 30S ribosomal subunit. Contacts protein S5. The interaction surface between S4 and S5 is involved in control of translational fidelity.

One of the primary rRNA binding proteins, it binds directly to 16S rRNA where it nucleates assembly of the body of the 30S subunit. In terms of biological role, with S5 and S12 plays an important role in translational accuracy. This Pectobacterium atrosepticum (strain SCRI 1043 / ATCC BAA-672) (Erwinia carotovora subsp. atroseptica) protein is Small ribosomal subunit protein uS4.